The chain runs to 443 residues: MDSITMVETETLSKTLIKPSSPTPQSLSHYNLSYNDQNIYPEYIFAGFFYSNPDGHEISTIREQLQNSLSKTLVSYYPFAGKVVKNDYIHCNDDGIEFVDVRIHCRMNDILKPELRSYASELIRPNRSTVGSEDSTALVQLSHFDCGGVAVAFGISHKVADAATILSFIKDWAASTCDLSSSHDVSTPVLVSDSIFPRQDNIICGQFPASPNCVRKRFLFSPEAIERLKSKAIEFGIEKPTRVEVLTAFLCRCATVAGKSAAKNNNCGQSLPFAVIQAVNLRPLLELPKNSVGNLISIYFSTIKENDTVNIEQEFTKLVIGELRKAKDKLKNLSQEKLNYVARMQDFANCLKELDISSFFDMENVDIDAYLFSSWCRFPFYDIDFGLGKPIWVCMFQPHFKNCIILMDYPFGDDYGIEALITLEQEKMPAFENNELLLSFASN.

His-157 serves as the catalytic Proton acceptor. The Nuclear localization signal signature appears at Arg-215 to Pro-222. Positions Thr-316–Arg-343 form a coiled coil. Asp-384 (proton acceptor) is an active-site residue.

Belongs to the plant acyltransferase family. As to quaternary structure, monomer. In terms of tissue distribution, expressed in cortical cells of the root tip, especially in hairy roots, as well as in etiolated seedlings. Mostly expressed in roots, and, at lower levels, in leaves.

The protein resides in the cytoplasm. Its subcellular location is the nucleus. The catalysed reaction is (+)-minovincinine + acetyl-CoA = (+)-echitovenine + CoA. The protein operates within alkaloid biosynthesis. In terms of biological role, component of the monoterpenoid indole alkaloids (MIAs, e.g. echitovenine, tabersonine, lochnericine, 19-hydroxytabersonine and horhammericine) biosynthetic pathway; MIAs are used in cancer treatment and other medical applications. Acyltransferase catalyzing the conversion of (+)-minovincinine to (+)-echitovenine. In Catharanthus roseus (Madagascar periwinkle), this protein is Minovincinine 19-hydroxy-O-acetyltransferase.